The following is a 390-amino-acid chain: Lipid-A-disaccharide synthase (390 aa).

The protein belongs to the LpxB family.

It carries out the reaction a lipid X + a UDP-2-N,3-O-bis[(3R)-3-hydroxyacyl]-alpha-D-glucosamine = a lipid A disaccharide + UDP + H(+). The protein operates within bacterial outer membrane biogenesis; LPS lipid A biosynthesis. In terms of biological role, condensation of UDP-2,3-diacylglucosamine and 2,3-diacylglucosamine-1-phosphate to form lipid A disaccharide, a precursor of lipid A, a phosphorylated glycolipid that anchors the lipopolysaccharide to the outer membrane of the cell. This Haemophilus influenzae (strain PittGG) protein is Lipid-A-disaccharide synthase.